The sequence spans 233 residues: Hydroxyacylglutathione hydrolase (233 aa).

Residues His52, His54, Asp56, His57, His108, Asp125, and His163 each coordinate Zn(2+).

The protein belongs to the metallo-beta-lactamase superfamily. Glyoxalase II family. In terms of assembly, monomer. Zn(2+) is required as a cofactor.

It carries out the reaction an S-(2-hydroxyacyl)glutathione + H2O = a 2-hydroxy carboxylate + glutathione + H(+). It functions in the pathway secondary metabolite metabolism; methylglyoxal degradation; (R)-lactate from methylglyoxal: step 2/2. Its function is as follows. Thiolesterase that catalyzes the hydrolysis of S-D-lactoyl-glutathione to form glutathione and D-lactic acid. This chain is Hydroxyacylglutathione hydrolase, found in Pasteurella multocida (strain Pm70).